The sequence spans 346 residues: NADH-ubiquinone oxidoreductase chain 2 (346 aa).

11 helical membrane passes run 1–21 (MNPH…TITI), 25–45 (HWVL…PLIS), 60–80 (FLTQ…NAWA), 95–115 (CLLL…HFWF), 124–144 (LMTA…LLLM), 149–169 (LNPA…GWMG), 178–195 (ILAF…IILV), 200–219 (LALL…FMAL), 242–262 (ATLM…GFMP), 274–294 (EMTP…FFYL), and 326–346 (AILA…HAIV).

This sequence belongs to the complex I subunit 2 family.

The protein resides in the mitochondrion inner membrane. It catalyses the reaction a ubiquinone + NADH + 5 H(+)(in) = a ubiquinol + NAD(+) + 4 H(+)(out). Functionally, core subunit of the mitochondrial membrane respiratory chain NADH dehydrogenase (Complex I) that is believed to belong to the minimal assembly required for catalysis. Complex I functions in the transfer of electrons from NADH to the respiratory chain. The immediate electron acceptor for the enzyme is believed to be ubiquinone. In Anas acuta (Northern pintail), this protein is NADH-ubiquinone oxidoreductase chain 2 (MT-ND2).